A 277-amino-acid chain; its full sequence is Radial spoke head protein 9 homolog (277 aa).

This sequence belongs to the flagellar radial spoke RSP9 family. As to quaternary structure, component of axonemal radial spoke complexes.

The protein resides in the cytoplasm. It localises to the cytoskeleton. It is found in the cilium axoneme. The protein localises to the flagellum axoneme. Its subcellular location is the cell projection. The protein resides in the kinocilium. In terms of biological role, functions as part of axonemal radial spoke complexes that play an important part in the motility of sperm and cilia. Required for motility of olfactory and neural cilia and for the structural integrity of ciliary axonemes in both 9+0 and 9+2 motile cilia. Essential for both the radial spoke head assembly and the central pair microtubule stability in ependymal motile cilia. In Danio rerio (Zebrafish), this protein is Radial spoke head protein 9 homolog (rsph9).